A 366-amino-acid polypeptide reads, in one-letter code: Ribosomal RNA large subunit methyltransferase M (366 aa).

S-adenosyl-L-methionine contacts are provided by residues Ser-188, 221-224, Asp-240, Asp-260, and Asp-277; that span reads CPGG. Lys-306 (proton acceptor) is an active-site residue.

Belongs to the class I-like SAM-binding methyltransferase superfamily. RNA methyltransferase RlmE family. RlmM subfamily. In terms of assembly, monomer.

It localises to the cytoplasm. The catalysed reaction is cytidine(2498) in 23S rRNA + S-adenosyl-L-methionine = 2'-O-methylcytidine(2498) in 23S rRNA + S-adenosyl-L-homocysteine + H(+). Its function is as follows. Catalyzes the 2'-O-methylation at nucleotide C2498 in 23S rRNA. The protein is Ribosomal RNA large subunit methyltransferase M of Escherichia fergusonii (strain ATCC 35469 / DSM 13698 / CCUG 18766 / IAM 14443 / JCM 21226 / LMG 7866 / NBRC 102419 / NCTC 12128 / CDC 0568-73).